The primary structure comprises 1342 residues: DNA-directed RNA polymerase subunit beta (1342 aa).

Belongs to the RNA polymerase beta chain family. In terms of assembly, the RNAP catalytic core consists of 2 alpha, 1 beta, 1 beta' and 1 omega subunit. When a sigma factor is associated with the core the holoenzyme is formed, which can initiate transcription.

The enzyme catalyses RNA(n) + a ribonucleoside 5'-triphosphate = RNA(n+1) + diphosphate. In terms of biological role, DNA-dependent RNA polymerase catalyzes the transcription of DNA into RNA using the four ribonucleoside triphosphates as substrates. In Colwellia psychrerythraea (strain 34H / ATCC BAA-681) (Vibrio psychroerythus), this protein is DNA-directed RNA polymerase subunit beta.